The following is a 630-amino-acid chain: 1-deoxy-D-xylulose-5-phosphate synthase (630 aa).

Residues histidine 72 and glycine 113–serine 115 each bind thiamine diphosphate. A Mg(2+)-binding site is contributed by aspartate 144. Thiamine diphosphate contacts are provided by residues glycine 145–alanine 146, asparagine 173, tyrosine 284, and glutamate 367. Asparagine 173 is a binding site for Mg(2+).

Belongs to the transketolase family. DXPS subfamily. In terms of assembly, homodimer. The cofactor is Mg(2+). Requires thiamine diphosphate as cofactor.

It carries out the reaction D-glyceraldehyde 3-phosphate + pyruvate + H(+) = 1-deoxy-D-xylulose 5-phosphate + CO2. It functions in the pathway metabolic intermediate biosynthesis; 1-deoxy-D-xylulose 5-phosphate biosynthesis; 1-deoxy-D-xylulose 5-phosphate from D-glyceraldehyde 3-phosphate and pyruvate: step 1/1. Its function is as follows. Catalyzes the acyloin condensation reaction between C atoms 2 and 3 of pyruvate and glyceraldehyde 3-phosphate to yield 1-deoxy-D-xylulose-5-phosphate (DXP). This Bacillus cereus (strain G9842) protein is 1-deoxy-D-xylulose-5-phosphate synthase.